Consider the following 117-residue polypeptide: Ig heavy chain V region 1-62-3 (117 aa).

The first 19 residues, 1–19 (MGWSCIMLFLAATATGVHF), serve as a signal peptide directing secretion. A framework-1 region spans residues 20–49 (QVQLQQPGAELVKPGASVKLSSKASGYTFT). The segment at 50–54 (SYWMH) is complementarity-determining-1. Positions 55 to 68 (WVKQRPGRGLEWIG) are framework-2. The interval 69–85 (RIDPNSGGTKYNEKFKS) is complementarity-determining-2. The interval 86–117 (KATLTVDKPSSTAYMQLSSLTSEDSAVYYCAR) is framework-3.

In Mus musculus (Mouse), this protein is Ig heavy chain V region 1-62-3 (Ighv1-62-3).